A 344-amino-acid chain; its full sequence is S-adenosylmethionine:tRNA ribosyltransferase-isomerase (344 aa).

It belongs to the QueA family. Monomer.

The protein resides in the cytoplasm. It catalyses the reaction 7-aminomethyl-7-carbaguanosine(34) in tRNA + S-adenosyl-L-methionine = epoxyqueuosine(34) in tRNA + adenine + L-methionine + 2 H(+). The protein operates within tRNA modification; tRNA-queuosine biosynthesis. In terms of biological role, transfers and isomerizes the ribose moiety from AdoMet to the 7-aminomethyl group of 7-deazaguanine (preQ1-tRNA) to give epoxyqueuosine (oQ-tRNA). This chain is S-adenosylmethionine:tRNA ribosyltransferase-isomerase, found in Heliobacterium modesticaldum (strain ATCC 51547 / Ice1).